Reading from the N-terminus, the 140-residue chain is Nucleoside diphosphate kinase (140 aa).

Positions 11, 59, 87, 93, 104, and 114 each coordinate ATP. H117 (pros-phosphohistidine intermediate) is an active-site residue.

It belongs to the NDK family. As to quaternary structure, homotetramer. It depends on Mg(2+) as a cofactor.

It localises to the cytoplasm. It carries out the reaction a 2'-deoxyribonucleoside 5'-diphosphate + ATP = a 2'-deoxyribonucleoside 5'-triphosphate + ADP. It catalyses the reaction a ribonucleoside 5'-diphosphate + ATP = a ribonucleoside 5'-triphosphate + ADP. In terms of biological role, major role in the synthesis of nucleoside triphosphates other than ATP. The ATP gamma phosphate is transferred to the NDP beta phosphate via a ping-pong mechanism, using a phosphorylated active-site intermediate. This Brucella canis (strain ATCC 23365 / NCTC 10854 / RM-666) protein is Nucleoside diphosphate kinase.